Consider the following 940-residue polypeptide: Isoleucine--tRNA ligase (940 aa).

The 'HIGH' region motif lies at proline 58–histidine 68. Glutamate 564 serves as a coordination point for L-isoleucyl-5'-AMP. Positions lysine 605–serine 609 match the 'KMSKS' region motif. An ATP-binding site is contributed by lysine 608. Residues cysteine 903, cysteine 906, cysteine 923, and cysteine 926 each coordinate Zn(2+).

Belongs to the class-I aminoacyl-tRNA synthetase family. IleS type 1 subfamily. As to quaternary structure, monomer. Zn(2+) is required as a cofactor.

It is found in the cytoplasm. It catalyses the reaction tRNA(Ile) + L-isoleucine + ATP = L-isoleucyl-tRNA(Ile) + AMP + diphosphate. In terms of biological role, catalyzes the attachment of isoleucine to tRNA(Ile). As IleRS can inadvertently accommodate and process structurally similar amino acids such as valine, to avoid such errors it has two additional distinct tRNA(Ile)-dependent editing activities. One activity is designated as 'pretransfer' editing and involves the hydrolysis of activated Val-AMP. The other activity is designated 'posttransfer' editing and involves deacylation of mischarged Val-tRNA(Ile). The sequence is that of Isoleucine--tRNA ligase from Shewanella putrefaciens (strain CN-32 / ATCC BAA-453).